Here is a 266-residue protein sequence, read N- to C-terminus: Undecaprenyl-diphosphatase 1 (266 aa).

8 consecutive transmembrane segments (helical) span residues 1–21, 39–59, 87–107, 114–134, 149–169, 183–203, 218–238, and 246–266; these read MDTF…FLPI, QGLS…VIYF, WWII…KDFI, TGVI…ADKM, ALLI…RSGA, AAAR…AILV, ALTL…HYFL, and MTPF…FIFL.

Belongs to the UppP family.

It localises to the cell inner membrane. It carries out the reaction di-trans,octa-cis-undecaprenyl diphosphate + H2O = di-trans,octa-cis-undecaprenyl phosphate + phosphate + H(+). In terms of biological role, catalyzes the dephosphorylation of undecaprenyl diphosphate (UPP). Confers resistance to bacitracin. The protein is Undecaprenyl-diphosphatase 1 of Shewanella oneidensis (strain ATCC 700550 / JCM 31522 / CIP 106686 / LMG 19005 / NCIMB 14063 / MR-1).